The following is a 147-amino-acid chain: 3-dehydroquinate dehydratase (147 aa).

The active-site Proton acceptor is Tyr24. The substrate site is built by Asn75, His81, and Asp88. Catalysis depends on His101, which acts as the Proton donor. Substrate is bound by residues 102 to 103 (IS) and Arg112.

Belongs to the type-II 3-dehydroquinase family. As to quaternary structure, homododecamer.

It carries out the reaction 3-dehydroquinate = 3-dehydroshikimate + H2O. It participates in metabolic intermediate biosynthesis; chorismate biosynthesis; chorismate from D-erythrose 4-phosphate and phosphoenolpyruvate: step 3/7. Catalyzes a trans-dehydration via an enolate intermediate. The chain is 3-dehydroquinate dehydratase from Cereibacter sphaeroides (strain ATCC 17023 / DSM 158 / JCM 6121 / CCUG 31486 / LMG 2827 / NBRC 12203 / NCIMB 8253 / ATH 2.4.1.) (Rhodobacter sphaeroides).